The chain runs to 160 residues: Cytochrome b6-f complex subunit 4 (160 aa).

3 helical membrane passes run 36-56 (LLYMFPVVILGTIACLTGLAV), 95-115 (LLGIVLQSMIPLGLIAIPFIE), and 131-151 (AVFLFGTVFTLYLGIGAALPI).

Belongs to the cytochrome b family. PetD subfamily. As to quaternary structure, the 4 large subunits of the cytochrome b6-f complex are cytochrome b6, subunit IV (17 kDa polypeptide, PetD), cytochrome f and the Rieske protein, while the 4 small subunits are PetG, PetL, PetM and PetN. The complex functions as a dimer.

The protein resides in the cellular thylakoid membrane. Component of the cytochrome b6-f complex, which mediates electron transfer between photosystem II (PSII) and photosystem I (PSI), cyclic electron flow around PSI, and state transitions. This Synechococcus elongatus (strain ATCC 33912 / PCC 7942 / FACHB-805) (Anacystis nidulans R2) protein is Cytochrome b6-f complex subunit 4.